We begin with the raw amino-acid sequence, 218 residues long: Protein P9 (218 aa).

The protein resides in the virion membrane. The sequence is that of Protein P9 (IX) from Pseudoalteromonas espejiana (Bacteriophage PM2).